The following is a 427-amino-acid chain: Gamma-glutamyl phosphate reductase (427 aa).

It belongs to the gamma-glutamyl phosphate reductase family.

The protein localises to the cytoplasm. It carries out the reaction L-glutamate 5-semialdehyde + phosphate + NADP(+) = L-glutamyl 5-phosphate + NADPH + H(+). It functions in the pathway amino-acid biosynthesis; L-proline biosynthesis; L-glutamate 5-semialdehyde from L-glutamate: step 2/2. In terms of biological role, catalyzes the NADPH-dependent reduction of L-glutamate 5-phosphate into L-glutamate 5-semialdehyde and phosphate. The product spontaneously undergoes cyclization to form 1-pyrroline-5-carboxylate. This Brucella ovis (strain ATCC 25840 / 63/290 / NCTC 10512) protein is Gamma-glutamyl phosphate reductase.